The following is a 308-amino-acid chain: Ribonuclease Z (308 aa).

H63, H65, D67, H68, H140, D211, and H269 together coordinate Zn(2+). D67 functions as the Proton acceptor in the catalytic mechanism.

The protein belongs to the RNase Z family. Homodimer. The cofactor is Zn(2+).

It catalyses the reaction Endonucleolytic cleavage of RNA, removing extra 3' nucleotides from tRNA precursor, generating 3' termini of tRNAs. A 3'-hydroxy group is left at the tRNA terminus and a 5'-phosphoryl group is left at the trailer molecule.. Zinc phosphodiesterase, which displays some tRNA 3'-processing endonuclease activity. Probably involved in tRNA maturation, by removing a 3'-trailer from precursor tRNA. The protein is Ribonuclease Z of Bacillus velezensis (strain DSM 23117 / BGSC 10A6 / LMG 26770 / FZB42) (Bacillus amyloliquefaciens subsp. plantarum).